The chain runs to 142 residues: Large ribosomal subunit protein uL13 (142 aa).

It belongs to the universal ribosomal protein uL13 family. In terms of assembly, part of the 50S ribosomal subunit.

This protein is one of the early assembly proteins of the 50S ribosomal subunit, although it is not seen to bind rRNA by itself. It is important during the early stages of 50S assembly. In Citrobacter koseri (strain ATCC BAA-895 / CDC 4225-83 / SGSC4696), this protein is Large ribosomal subunit protein uL13.